A 372-amino-acid chain; its full sequence is MSVVKIPLVKKKSLRQNLIENGKLKEFMRTHKYNLGSKYIREAATLVSEQPLQNYLDTEYFGTIGIGTPAQDFTVIFDTGSSNLWVPSIYCSSEACTNHNRFNPQDSSTYEATSETLSITYGTGSMTGILGYDTVQVGGISDTNQIFGLSETEPGSFLYYAPFDGILGLAYPSISSSGATPVFDNIWDQGLVSQDLFSVYLSSNEESGSVVIFGDIDSSYYSGSLNWVPVSVEGYWQITVDSITMNGESIACSDGCQAIVDTGTSLLAGPTTAISNIQSYIGASEDSSGEVVISCSSIDSLPDIVFTINGVQYPVPPSAYILQSNGICSSGFEGMDISTSSGDLWILGDVFIRQYFTVFDRGNNQIGLAPVA.

A propeptide spans Met1 to Glu42 (activation peptide). Residues Tyr60–Ala369 enclose the Peptidase A1 domain. Asp78 is a catalytic residue. The cysteines at positions 91 and 96 are disulfide-linked. Phosphoserine is present on Ser114. Cys252 and Cys256 are joined by a disulfide. Asp261 is a catalytic residue. The cysteines at positions 295 and 328 are disulfide-linked.

It belongs to the peptidase A1 family.

It localises to the secreted. The catalysed reaction is Preferential cleavage: hydrophobic, preferably aromatic, residues in P1 and P1' positions. Cleaves 1-Phe-|-Val-2, 4-Gln-|-His-5, 13-Glu-|-Ala-14, 14-Ala-|-Leu-15, 15-Leu-|-Tyr-16, 16-Tyr-|-Leu-17, 23-Gly-|-Phe-24, 24-Phe-|-Phe-25 and 25-Phe-|-Tyr-26 bonds in the B chain of insulin.. Functionally, shows particularly broad specificity; although bonds involving phenylalanine and leucine are preferred, many others are also cleaved to some extent. In Bos taurus (Bovine), this protein is Pepsin A (PGA).